Consider the following 193-residue polypeptide: Superoxide dismutase [Fe] (193 aa).

4 residues coordinate Fe cation: H27, H74, D157, and H161.

The protein belongs to the iron/manganese superoxide dismutase family. As to quaternary structure, homodimer. Fe cation serves as cofactor.

The catalysed reaction is 2 superoxide + 2 H(+) = H2O2 + O2. Destroys superoxide anion radicals which are normally produced within the cells and which are toxic to biological systems. Partially complements double sodA-sodB deletions in E.coli. The polypeptide is Superoxide dismutase [Fe] (Pseudomonas aeruginosa (strain ATCC 15692 / DSM 22644 / CIP 104116 / JCM 14847 / LMG 12228 / 1C / PRS 101 / PAO1)).